Here is a 390-residue protein sequence, read N- to C-terminus: Cystathionine beta-lyase MetC (390 aa).

Position 200 is an N6-(pyridoxal phosphate)lysine (Lys200).

Belongs to the trans-sulfuration enzymes family. Homotetramer. It depends on pyridoxal 5'-phosphate as a cofactor.

It is found in the cytoplasm. The catalysed reaction is L,L-cystathionine + H2O = L-homocysteine + pyruvate + NH4(+). The enzyme catalyses an S-substituted L-cysteine + H2O = a thiol + pyruvate + NH4(+). The protein operates within amino-acid biosynthesis; L-methionine biosynthesis via de novo pathway; L-homocysteine from L-cystathionine: step 1/1. In terms of biological role, catalyzes the transformation of cystathionine into homocysteine. Also exhibits cysteine desulfhydrase activity in vitro, producing sulfide from cysteine. In Bacillus subtilis (strain 168), this protein is Cystathionine beta-lyase MetC (metC).